The primary structure comprises 779 residues: Pleckstrin homology domain-containing family A member 4 (779 aa).

A PH domain is found at 54–153 (PVHIRGWLHK…WLRALGKASR (100 aa)). Disordered stretches follow at residues 152–355 (SRAE…LPGP), 495–669 (AGLG…SGGH), and 694–766 (SPER…QEEG). Ser-164 is subject to Phosphoserine. The segment covering 183-193 (VNRREEGRTSE) has biased composition (basic and acidic residues). Low complexity-rich tracts occupy residues 246-259 (PRPR…PPLS) and 324-334 (QSTQVSSGSST). Positions 517-527 (QREESSERESL) are enriched in basic and acidic residues. The segment covering 528 to 540 (SESLELSSPQSPE) has biased composition (low complexity). The residue at position 562 (Ser-562) is a Phosphoserine. A compositionally biased stretch (polar residues) spans 567–580 (RASSPECRQQSSPL). 2 stretches are compositionally biased toward low complexity: residues 608–627 (GLSL…RTLS) and 649–659 (SSGSWSSPRHS). The segment covering 720–740 (VTSSPTSHKANSATTGFSCQG) has biased composition (polar residues).

It localises to the cytoplasm. The protein localises to the membrane. Binds specifically to phosphatidylinositol 3-phosphate (PtdIns3P), but not to other phosphoinositides. The chain is Pleckstrin homology domain-containing family A member 4 (Plekha4) from Rattus norvegicus (Rat).